The following is a 217-amino-acid chain: N-(5'-phosphoribosyl)anthranilate isomerase (217 aa).

The protein belongs to the TrpF family.

The enzyme catalyses N-(5-phospho-beta-D-ribosyl)anthranilate = 1-(2-carboxyphenylamino)-1-deoxy-D-ribulose 5-phosphate. It functions in the pathway amino-acid biosynthesis; L-tryptophan biosynthesis; L-tryptophan from chorismate: step 3/5. The sequence is that of N-(5'-phosphoribosyl)anthranilate isomerase from Chlorobium chlorochromatii (strain CaD3).